We begin with the raw amino-acid sequence, 250 residues long: Hydroxyethylthiazole kinase (250 aa).

Met39 is a binding site for substrate. 2 residues coordinate ATP: Arg114 and Thr159. Gly186 lines the substrate pocket.

The protein belongs to the Thz kinase family. Mg(2+) is required as a cofactor.

It carries out the reaction 5-(2-hydroxyethyl)-4-methylthiazole + ATP = 4-methyl-5-(2-phosphooxyethyl)-thiazole + ADP + H(+). The protein operates within cofactor biosynthesis; thiamine diphosphate biosynthesis; 4-methyl-5-(2-phosphoethyl)-thiazole from 5-(2-hydroxyethyl)-4-methylthiazole: step 1/1. Catalyzes the phosphorylation of the hydroxyl group of 4-methyl-5-beta-hydroxyethylthiazole (THZ). This is Hydroxyethylthiazole kinase from Lactococcus lactis subsp. cremoris (strain SK11).